A 76-amino-acid chain; its full sequence is Large ribosomal subunit protein uL30 (76 aa).

It belongs to the universal ribosomal protein uL30 family. As to quaternary structure, part of the 50S ribosomal subunit.

The protein is Large ribosomal subunit protein uL30 of Anaeromyxobacter dehalogenans (strain 2CP-1 / ATCC BAA-258).